The sequence spans 360 residues: Chorismate synthase (360 aa).

The NADP(+) site is built by R48 and R54. FMN contacts are provided by residues 125-127 (RSS), 246-247 (NA), G286, 301-305 (KPTSS), and R327.

The protein belongs to the chorismate synthase family. In terms of assembly, homotetramer. The cofactor is FMNH2.

It catalyses the reaction 5-O-(1-carboxyvinyl)-3-phosphoshikimate = chorismate + phosphate. It participates in metabolic intermediate biosynthesis; chorismate biosynthesis; chorismate from D-erythrose 4-phosphate and phosphoenolpyruvate: step 7/7. Catalyzes the anti-1,4-elimination of the C-3 phosphate and the C-6 proR hydrogen from 5-enolpyruvylshikimate-3-phosphate (EPSP) to yield chorismate, which is the branch point compound that serves as the starting substrate for the three terminal pathways of aromatic amino acid biosynthesis. This reaction introduces a second double bond into the aromatic ring system. The polypeptide is Chorismate synthase (Actinobacillus succinogenes (strain ATCC 55618 / DSM 22257 / CCUG 43843 / 130Z)).